Consider the following 64-residue polypeptide: Large ribosomal subunit protein bL35 (64 aa).

Residues 1 to 20 form a disordered region; sequence MKQKTHKGTAKRIKVTGSGK.

This sequence belongs to the bacterial ribosomal protein bL35 family.

The chain is Large ribosomal subunit protein bL35 from Corynebacterium urealyticum (strain ATCC 43042 / DSM 7109).